A 195-amino-acid chain; its full sequence is Dehydrin DHN1 (195 aa).

The disordered stretch occupies residues 1–195 (MAEYGDQYGR…IKEKLPGGHH (195 aa)). Residues 37–48 (YGTTGTTVGYGT) are compositionally biased toward low complexity. A compositionally biased stretch (polar residues) spans 50–64 (QCVTTVTTGAQKTDQ). Low complexity predominate over residues 65 to 88 (YGTPGTTGAYGTDQYGTTGTTGEY). Composition is skewed to basic and acidic residues over residues 136 to 153 (KEKIKEKLPGGGHGDDQT) and 173 to 195 (SPEHEEKKGIMDKIKEKLPGGHH).

The protein belongs to the plant dehydrin family. In terms of processing, phosphorylated in vitro by CK2. As to expression, expressed in roots and leaves.

The protein resides in the cytoplasm. It localises to the nucleus. The sequence is that of Dehydrin DHN1 from Avicennia marina (Grey mangrove).